The following is an 85-amino-acid chain: MDVQAAHEFGISIAQAARDLGAGIAVFALAGVGMGLGNIFSTLISSVARNPASRPHVFGIGMLGFALTEAVALFALLIAFLILFA.

2 helical membrane passes run 20–40 and 65–85; these read LGAG…GNIF and FALT…ILFA.

It belongs to the ATPase C chain family. In terms of assembly, F-type ATPases have 2 components, F(1) - the catalytic core - and F(0) - the membrane proton channel. F(1) has five subunits: alpha(3), beta(3), gamma(1), delta(1), epsilon(1). F(0) has three main subunits: a(1), b(2) and c(10-14). The alpha and beta chains form an alternating ring which encloses part of the gamma chain. F(1) is attached to F(0) by a central stalk formed by the gamma and epsilon chains, while a peripheral stalk is formed by the delta and b chains.

The protein resides in the cell inner membrane. F(1)F(0) ATP synthase produces ATP from ADP in the presence of a proton or sodium gradient. F-type ATPases consist of two structural domains, F(1) containing the extramembraneous catalytic core and F(0) containing the membrane proton channel, linked together by a central stalk and a peripheral stalk. During catalysis, ATP synthesis in the catalytic domain of F(1) is coupled via a rotary mechanism of the central stalk subunits to proton translocation. Its function is as follows. Key component of the F(0) channel; it plays a direct role in translocation across the membrane. A homomeric c-ring of between 10-14 subunits forms the central stalk rotor element with the F(1) delta and epsilon subunits. The chain is ATP synthase subunit c from Gluconobacter oxydans (strain 621H) (Gluconobacter suboxydans).